The chain runs to 183 residues: Small ribosomal subunit protein uS4c (183 aa).

An S4 RNA-binding domain is found at 82-143 (MRLDNILFRL…KQRSKALIQN (62 aa)).

It belongs to the universal ribosomal protein uS4 family. Part of the 30S ribosomal subunit. Contacts protein S5. The interaction surface between S4 and S5 is involved in control of translational fidelity.

It is found in the plastid. The protein resides in the chloroplast. One of the primary rRNA binding proteins, it binds directly to 16S rRNA where it nucleates assembly of the body of the 30S subunit. Its function is as follows. With S5 and S12 plays an important role in translational accuracy. In Gladiolus communis (Cornflag), this protein is Small ribosomal subunit protein uS4c (rps4).